The following is a 1321-amino-acid chain: C-Jun-amino-terminal kinase-interacting protein 4 (1321 aa).

At Met1 the chain carries N-acetylmethionine. Residues 7–95 (VVYQEEPGGS…ITQYEREKAL (89 aa)) enclose the RH1 domain. Positions 66–166 (AQDQEHQVEL…NALHQRHTEM (101 aa)) form a coiled coil. Residues Ser109, Ser183, Ser185, Ser194, and Ser203 each carry the phosphoserine modification. Residues 203–292 (SLGIFPLPAG…SDVATIPTDT (90 aa)) are disordered. Position 217 is a phosphothreonine (Thr217). Polar residues predominate over residues 236-253 (ELSQPRSHTSLKVSNSPE). Ser238, Ser251, Ser265, Ser268, and Ser272 each carry phosphoserine. Residues 266-285 (DVSQGGSKATTPASTANSDV) are compositionally biased toward polar residues. Thr292 is subject to Phosphothreonine. Residues Ser311, Ser329, Ser332, and Ser347 each carry the phosphoserine modification. Phosphothreonine is present on residues Thr348, Thr365, and Thr418. Residues 408 to 534 (REVENLILEN…LQEAVRWTEM (127 aa)) adopt a coiled-coil conformation. Positions 473–489 (LRKARAEAEDARQKAKD) are enriched in basic and acidic residues. 2 disordered regions span residues 473 to 500 (LRKARAEAEDARQKAKDDDDSDIPTAQR) and 563 to 600 (SSNTTKKPEPPVNLKYNAPTSHVTPSVKKRSSTLSQLP). Residues 500–571 (RKRFTRVEMA…SSSNTTKKPE (72 aa)) enclose the RH2 domain. Thr586 carries the phosphothreonine modification. Ser588 bears the Phosphoserine mark. At Thr595 the chain carries Phosphothreonine. Phosphoserine occurs at positions 705, 728, 730, 732, and 733. Positions 724-758 (SKQRSASQSSLDKLDQELKEQQKELKNQEELSSLV) form a coiled coil. Residues 854 to 906 (GAATSPSTNGASPVMDKPPEMEAENSEVDENVPTAEEATEATEGNAGSAEDTV) are disordered. Residues 855–864 (AATSPSTNGA) are compositionally biased toward polar residues. Residues 874–883 (MEAENSEVDE) show a composition bias toward acidic residues. Over residues 894–903 (ATEGNAGSAE) the composition is skewed to low complexity. A Phosphoserine modification is found at Ser1188. The tract at residues 1239 to 1266 (PQSSSSGTDLTGDKAGPSAQEPGSQTPL) is disordered. Thr1264 bears the Phosphothreonine mark.

The protein belongs to the JIP scaffold family. As to quaternary structure, homodimer. The homodimer interacts with ARF6, forming a heterotetramer. Homooligomer. Interacts with MAX, MAPK14, MAP3K3, MYC, KNS2 and MAP2K4. Interaction with KNS2 is important in the formation of ternary complex with MAPK8. Interacts with NFKB1. Interacts with PIP4P1. Interacts with PIKFYVE. In terms of assembly, interacts with MAPK8, MAPK9, MAPK10. In terms of processing, phosphorylated by MAPK8 and MAPK14. Expressed only in testis on the round spermatids of stage I, II and II. Absent in spermatogonia and spermatocyte. As to expression, expressed in testis and in acute myeloid leukemia (AML) patients. In terms of tissue distribution, expressed in testis.

It is found in the cytoplasm. It localises to the perinuclear region. The protein localises to the lysosome membrane. The protein resides in the cytoplasmic vesicle. Its subcellular location is the secretory vesicle. It is found in the acrosome. Its activity is regulated as follows. May play a role in spermatozoa-egg-interaction. Functionally, the JNK-interacting protein (JIP) group of scaffold proteins selectively mediates JNK signaling by aggregating specific components of the MAPK cascade to form a functional JNK signaling module. Regulates lysosomal positioning by acting as an adapter protein which links PIP4P1-positive lysosomes to the dynein-dynactin complex. Assists PIKFYVE selective functionality in microtubule-based endosome-to-TGN trafficking. The chain is C-Jun-amino-terminal kinase-interacting protein 4 from Homo sapiens (Human).